A 102-amino-acid polypeptide reads, in one-letter code: Small ribosomal subunit protein uS10 (102 aa).

Belongs to the universal ribosomal protein uS10 family. As to quaternary structure, part of the 30S ribosomal subunit.

Functionally, involved in the binding of tRNA to the ribosomes. The polypeptide is Small ribosomal subunit protein uS10 (Phenylobacterium zucineum (strain HLK1)).